The primary structure comprises 347 residues: MRPAILAAFSTLPAAAKATYPFAPETFDGSYKDIGLPTIYDLSATQSTNYNGSWATGSWITSVSGGQYFVVSHYVNDGIHDVYRSSILDLSSLKYRYFFQAGNGSYTASPPSHLKAGVGKGNGFEGISNDNYTTMRVQSSHPNVTFDLTYHATTKPLINGGAGVVMLGASESKQWSLPACWTNGFLIVGDEQIPIDPKRSLTWYDRQWGTGGLTNWTWYGLHIPKTGHVLSIWTGDTDADRAAPITPVRFATVRNAYGAQTVCNITWIPDLSHIFHSDSTNKSYPLAWTVEIPSYDAIIKVKSRTENQLNTGSHGSEPEAYNGFVTFAGQFQGTETEGFGIVEIVYL.

The signal sequence occupies residues 1–18 (MRPAILAAFSTLPAAAKA). Residues asparagine 51, asparagine 103, asparagine 131, asparagine 143, asparagine 215, asparagine 264, and asparagine 281 are each glycosylated (N-linked (GlcNAc...) asparagine).

It catalyses the reaction [(1'E)-5'-(3',3'-dimethyloxiran-2'-yl)-3'-hydroxy-3'-methylpent-1'-en-1'-yl]-quinolinone B = (1'E,3'E)-5-(3,3-dimethyloxiran-2-yl)-3-methylhexa-1,3-dienyl-quinolinone B + H2O. The protein operates within secondary metabolite biosynthesis. Its pathway is alkaloid biosynthesis. It functions in the pathway mycotoxin biosynthesis. Its function is as follows. Dehydratase; part of the gene cluster that mediates the biosynthesis of the aspoquinolone mycotoxins. Within the pathway, the dehydratase asqC catalyzes the dehydratation of the epoxide at C-3 to produce (1'E,3'E)-5-(3,3-dimethyloxiran-2-yl)-3-methylhexa-1,3-dienyl-quinolinone B. The first step of the pathway is catalyzed by the nonribosomal peptide synthetase asqK that condenses anthranilic acid and O-methyl-L-tyrosine to produce 4'-methoxycyclopeptin. 4'-methoxycyclopeptin is then converted to 4'-methoxydehydrocyclopeptin by the ketoglutarate-dependent dioxygenase asqJ. AsqJ also converts its first product 4'-methoxydehydrocyclopeptin to 4'-methoxycyclopenin. The following conversion of 4'-methoxycyclopenin into 4'-methoxyviridicatin is catalyzed by the cyclopenase asqI. 4'-methoxyviridicatin is the precursor of quinolone natural products, and is further converted to quinolinone B. The prenyltransferase asqH1 then catalyzes the canonical Friedel-Crafts alkylation of quinolinone B with dimethylallyl cation to yield dimethylallyl quinolone, which is subjected to FAD-dependent dehydrogenation by the FAD-linked oxidoreductase asqF to yield conjugated aryl diene. The delta(3') double bond then serves as the site of the second alkylation with DMAPP catalyzed by the prenyltransferase asqH2 to yield a carbenium ion intermediate, which can be attacked by H(2)O to yield a styrenyl quinolone containing a C3'-hydroxyprenyl chain. The FAD-dependent monooxygenase asqG performs epoxidation of the terminal C7'-C8' olefin. Finally, after dehydratation of the epoxide at C3 by asqC, the quinolone epoxide rearrangement protein asqO catalyzes an enzymatic 3-exo-tet cyclization to yield the cyclopropyl-THF ring system in aspoquinolone. This Emericella nidulans (strain FGSC A4 / ATCC 38163 / CBS 112.46 / NRRL 194 / M139) (Aspergillus nidulans) protein is Dehydratase asqC.